The following is a 409-amino-acid chain: MAENSVKKVVLAYSGGLDTSVILRWLQTERGAEVVTFTADLGQGEELEPARRKAEMFGVKEIFVEDLRETFVKDFVFPMFRANALYEGQYLLGTSIARPLIAQRQIEIAEAVGADAVAHGATGKGNDQVRFELAYYALKPDVKVVAPWREWSLTSRTKLLEFAEAHQIPIAKDKRGEAPFSVDANLLHSSSEGKILEDPAQAPDEIVYQRTISPEAAPDVVTEISIDFAQGDAVALNGVALSPATLLTRLNELGRDNGIGRLDLVENRFVGMKSRGVYETPGGTILLAAHRAIESITLDREAAHLKDSLMPRYAELIYNGFWFSPERRMLQALIDASQNSVTGRVRLKLYKGNVIVAGRESPNSLYSARMVTFEDDEGAYNQQDAAGFIKLNALRLRLGGAIGRRGGAL.

Residues 12 to 20 (AYSGGLDTS) and alanine 39 each bind ATP. L-citrulline is bound by residues tyrosine 90 and serine 95. Glycine 120 provides a ligand contact to ATP. The L-aspartate site is built by threonine 122, asparagine 126, and aspartate 127. Asparagine 126 is a binding site for L-citrulline. Residues arginine 130, serine 181, serine 190, glutamate 266, and tyrosine 278 each coordinate L-citrulline.

Belongs to the argininosuccinate synthase family. Type 1 subfamily. Homotetramer.

It is found in the cytoplasm. The catalysed reaction is L-citrulline + L-aspartate + ATP = 2-(N(omega)-L-arginino)succinate + AMP + diphosphate + H(+). It functions in the pathway amino-acid biosynthesis; L-arginine biosynthesis; L-arginine from L-ornithine and carbamoyl phosphate: step 2/3. This chain is Argininosuccinate synthase, found in Acidiphilium cryptum (strain JF-5).